The sequence spans 317 residues: Acetyl-coenzyme A carboxylase carboxyl transferase subunit alpha (317 aa).

A CoA carboxyltransferase C-terminal domain is found at K37–D291.

Belongs to the AccA family. In terms of assembly, acetyl-CoA carboxylase is a heterohexamer composed of biotin carboxyl carrier protein (AccB), biotin carboxylase (AccC) and two subunits each of ACCase subunit alpha (AccA) and ACCase subunit beta (AccD).

It localises to the cytoplasm. The catalysed reaction is N(6)-carboxybiotinyl-L-lysyl-[protein] + acetyl-CoA = N(6)-biotinyl-L-lysyl-[protein] + malonyl-CoA. It participates in lipid metabolism; malonyl-CoA biosynthesis; malonyl-CoA from acetyl-CoA: step 1/1. Its function is as follows. Component of the acetyl coenzyme A carboxylase (ACC) complex. First, biotin carboxylase catalyzes the carboxylation of biotin on its carrier protein (BCCP) and then the CO(2) group is transferred by the carboxyltransferase to acetyl-CoA to form malonyl-CoA. This chain is Acetyl-coenzyme A carboxylase carboxyl transferase subunit alpha, found in Rhodospirillum centenum (strain ATCC 51521 / SW).